A 127-amino-acid chain; its full sequence is Glycine cleavage system H protein (127 aa).

One can recognise a Lipoyl-binding domain in the interval 27–109; that stretch reads TVRVGITHIA…YGEGWLYEVK (83 aa). Residue Lys68 is modified to N6-lipoyllysine.

The protein belongs to the GcvH family. In terms of assembly, the glycine cleavage system is composed of four proteins: P, T, L and H. (R)-lipoate is required as a cofactor.

Its function is as follows. The glycine cleavage system catalyzes the degradation of glycine. The H protein shuttles the methylamine group of glycine from the P protein to the T protein. The polypeptide is Glycine cleavage system H protein (Corynebacterium jeikeium (strain K411)).